Consider the following 468-residue polypeptide: 3-isopropylmalate dehydratase large subunit (468 aa).

Residues Cys-347, Cys-408, and Cys-411 each contribute to the [4Fe-4S] cluster site.

The protein belongs to the aconitase/IPM isomerase family. LeuC type 1 subfamily. Heterodimer of LeuC and LeuD. The cofactor is [4Fe-4S] cluster.

The catalysed reaction is (2R,3S)-3-isopropylmalate = (2S)-2-isopropylmalate. The protein operates within amino-acid biosynthesis; L-leucine biosynthesis; L-leucine from 3-methyl-2-oxobutanoate: step 2/4. In terms of biological role, catalyzes the isomerization between 2-isopropylmalate and 3-isopropylmalate, via the formation of 2-isopropylmaleate. This is 3-isopropylmalate dehydratase large subunit from Janthinobacterium sp. (strain Marseille) (Minibacterium massiliensis).